A 321-amino-acid polypeptide reads, in one-letter code: Hex-5-enoyl-[acyl-carrier protein] acetylenase (321 aa).

The next 2 membrane-spanning stretches (helical) occupy residues 36 to 56 and 62 to 82; these read FLLY…LLWW and VEIG…SVGL. The short motif at 83 to 88 is the Histidine box-1 element; sequence HRYFAH. A helical transmembrane segment spans residues 99–119; it reads VILAILGCMGAQGPVVSWVAV. The Histidine box-2 motif lies at 120-124; that stretch reads HRRHH. The helical transmembrane segment at 188-208 threads the bilayer; the sequence is YVVWIVLGLLIPTILGGIIHG. The Histidine box-3 motif lies at 269–273; that stretch reads QNNHH.

This sequence belongs to the fatty acid desaturase type 2 family. Fe(2+) is required as a cofactor.

The protein localises to the membrane. It carries out the reaction 5-hexenoyl-[ACP] + 2 reduced [2Fe-2S]-[ferredoxin] + O2 + 2 H(+) = 5-hexynoyl-[ACP] + 2 oxidized [2Fe-2S]-[ferredoxin] + 2 H2O. The catalysed reaction is hexanoyl-[ACP] + 2 reduced [2Fe-2S]-[ferredoxin] + O2 + 2 H(+) = 5-hexenoyl-[ACP] + 2 oxidized [2Fe-2S]-[ferredoxin] + 2 H2O. Functionally, desaturase involved in the biosynthesis of jamaicamides, which show sodium channel blocking activity and fish toxicity. Catalyzes the conversion of 5-hexenoyl loaded onto the acyl carrier protein JamC (5-hexenoyl-JamC) to 5-hexynoyl-JamC. Can also catalyze the conversion of hexanoyl-JamC to 5-hexenoyl-JamC, but it cannot use free 5-hexenoic acid, 5-hexenoyl-CoA, 2-hexenoyl-JamC, 3-hexenoyl-JamC or 4-hexenoyl-JamC. Is specific for C(6) chains, and cannot use 4-pentenoyl-JamC, 6-heptenoyl-JamC or 7-octenoyl-JamC as substrate. This chain is Hex-5-enoyl-[acyl-carrier protein] acetylenase, found in Moorena producens (strain JHB).